We begin with the raw amino-acid sequence, 962 residues long: Probable transport protein MmpL9 (962 aa).

The next 12 helical transmembrane spans lie at 25-45, 201-223, 225-247, 256-276, 302-322, 335-355, 383-403, 768-788, 796-816, 820-840, 867-887, and 895-915; these read LAAI…SVAV, LITG…SIAT, LLIL…FLGY, FVVN…AIFL, ANVI…LSFA, AIGM…IIAI, WPGP…LALP, YDIL…MLMI, LVIV…SVLI, FVGL…LLAV, AMAG…FTMA, and RVIG…TLVV.

Belongs to the resistance-nodulation-cell division (RND) (TC 2.A.6) family. MmpL subfamily.

The protein localises to the cell membrane. In Mycobacterium tuberculosis (strain ATCC 25618 / H37Rv), this protein is Probable transport protein MmpL9 (mmpL9).